The sequence spans 539 residues: O-phosphoserine--tRNA(Cys) ligase (539 aa).

Substrate is bound by residues 188 to 190 (HMT), 233 to 235 (SAS), 275 to 276 (YY), and Asn327.

It belongs to the class-II aminoacyl-tRNA synthetase family. O-phosphoseryl-tRNA(Cys) synthetase subfamily. In terms of assembly, homotetramer. Interacts with SepCysS.

The enzyme catalyses tRNA(Cys) + O-phospho-L-serine + ATP = O-phospho-L-seryl-tRNA(Cys) + AMP + diphosphate. In terms of biological role, catalyzes the attachment of O-phosphoserine (Sep) to tRNA(Cys). The chain is O-phosphoserine--tRNA(Cys) ligase from Methanosarcina mazei (strain ATCC BAA-159 / DSM 3647 / Goe1 / Go1 / JCM 11833 / OCM 88) (Methanosarcina frisia).